The chain runs to 449 residues: UDP-N-acetylmuramoylalanine--D-glutamate ligase (449 aa).

Gly-119–Thr-125 lines the ATP pocket.

The protein belongs to the MurCDEF family.

The protein resides in the cytoplasm. The enzyme catalyses UDP-N-acetyl-alpha-D-muramoyl-L-alanine + D-glutamate + ATP = UDP-N-acetyl-alpha-D-muramoyl-L-alanyl-D-glutamate + ADP + phosphate + H(+). The protein operates within cell wall biogenesis; peptidoglycan biosynthesis. In terms of biological role, cell wall formation. Catalyzes the addition of glutamate to the nucleotide precursor UDP-N-acetylmuramoyl-L-alanine (UMA). The chain is UDP-N-acetylmuramoylalanine--D-glutamate ligase from Streptococcus suis (strain 98HAH33).